A 35-amino-acid polypeptide reads, in one-letter code: GFGTILKALAKIAGKVVKKLATKPGATYMLKENLK.

At K35 the chain carries Lysine amide.

Expressed by the venom gland.

It is found in the secreted. This Cupiennius salei (American wandering spider) protein is Cupiennin-2a.